Consider the following 141-residue polypeptide: Large ribosomal subunit protein uL11 (141 aa).

It belongs to the universal ribosomal protein uL11 family. As to quaternary structure, part of the ribosomal stalk of the 50S ribosomal subunit. Interacts with L10 and the large rRNA to form the base of the stalk. L10 forms an elongated spine to which L12 dimers bind in a sequential fashion forming a multimeric L10(L12)X complex. One or more lysine residues are methylated.

In terms of biological role, forms part of the ribosomal stalk which helps the ribosome interact with GTP-bound translation factors. This is Large ribosomal subunit protein uL11 from Nitratiruptor sp. (strain SB155-2).